The chain runs to 628 residues: Leucine-rich repeat and fibronectin type-III domain-containing protein 3 (628 aa).

A signal peptide spans 1 to 16; that stretch reads MAVLPLLLCLLPLAPA. At 17-540 the chain is on the extracellular side; it reads SSPPQPASPS…APHAPFLGGT (524 aa). Residues 19–59 form the LRRNT domain; it reads PPQPASPSPCPRRCRCQTQSLPLSVLCPGAGLLFVPPSLDR. LRR repeat units lie at residues 60 to 83, 84 to 105, 108 to 129, 132 to 153, 157 to 178, 181 to 202, and 205 to 226; these read RAAE…ANMT, GLLH…AFSD, ALRA…QLRG, NLRH…ALDD, TLED…ALGR, NVNT…AFSR, and KLAR…PLFS. The region spanning 249–295 is the LRRCT domain; it reads NPLHCNCELVWLRRLAREDDLEACASPPALGGRYFWAVGEEEFVCEP. One can recognise an Ig-like domain in the interval 295–382; it reads PPVVTHRSPP…GEATAAVELT (88 aa). An intrachain disulfide couples Cys-317 to Cys-366. N-linked (GlcNAc...) asparagine glycans are attached at residues Asn-348 and Asn-393. A disordered region spans residues 380–433; sequence ELTVGPPPPPQLANSTSCDPPRDGEPDALTPPSAASASASAKAAEAGPPTDRGV. The segment covering 410–428 has biased composition (low complexity); the sequence is PPSAASASASAKAAEAGPP. Positions 427-525 constitute a Fibronectin type-III domain; it reads PPTDRGVQVT…GCNRFSTEPA (99 aa). Residues 541–561 form a helical membrane-spanning segment; the sequence is MIIALGGVIVASVLVFIFVLL. Residues 562 to 628 lie on the Cytoplasmic side of the membrane; sequence MRYKVHGGQP…WGPSHEPMGP (67 aa). The interval 570-609 is disordered; that stretch reads QPPGKTKASAPVSSVCSQTNGALGPMPAPPAPEPSAPRAH. The segment covering 580–590 has biased composition (polar residues); that stretch reads PVSSVCSQTNG. Residues 595–604 show a composition bias toward pro residues; it reads MPAPPAPEPS.

The protein belongs to the LRFN family. Can form heteromeric complexes with LRFN1, LRFN2, LRFN4 and LRFN5. Able to form homomeric complexes across cell junctions, between adjacent cells. Does not interact with DLG4. In terms of processing, N-glycosylated.

It localises to the cell membrane. Its subcellular location is the cell projection. It is found in the axon. The protein resides in the dendrite. The protein localises to the synapse. It localises to the presynaptic cell membrane. Its subcellular location is the postsynaptic cell membrane. Its function is as follows. Cell adhesion molecule that mediates homophilic cell-cell adhesion in a Ca(2+)-independent manner. Promotes neurite outgrowth in hippocampal neurons. This chain is Leucine-rich repeat and fibronectin type-III domain-containing protein 3 (LRFN3), found in Bos taurus (Bovine).